Consider the following 300-residue polypeptide: Protein FANTASTIC FOUR 4 (300 aa).

Residues 30-56 (PQLSTPLKSHFQNSSIAPQDNPITINA) show a composition bias toward polar residues. Disordered regions lie at residues 30 to 104 (PQLS…SPSS), 142 to 170 (TMET…LPPP), and 227 to 264 (TETK…KEEE). Composition is skewed to low complexity over residues 58 to 88 (SLPS…NSSS) and 142 to 151 (TMETRTTSTT). The FAF domain maps to 166 to 217 (SLPPPLTSMIGFDCIEVKSHRENGRLVMMATRPPPRNRCLQDRSNGCVRLAI). The span at 233 to 262 (KEEEEEETIETVRDNEEEIPEYKEEEEEKE) shows a compositional bias: acidic residues.

Belongs to the fantastic four family. As to expression, expressed in the shoot apex and young siliques. Detected in provascular and vascular tissue, but not in the vegetative meristem. In inflorescences, restricted to the base of the flower and to the vasculature of the stem and the pedicels, but absent from young flowers. Detected in the center of the inflorescence meristem.

Regulates the size of the shoot meristem by modulating the CLV3-WUS feedback loop. Can repress WUS but is under negative control by CLV3. This chain is Protein FANTASTIC FOUR 4 (FAF4), found in Arabidopsis thaliana (Mouse-ear cress).